The primary structure comprises 102 residues: Small ribosomal subunit protein bS18 (102 aa).

This sequence belongs to the bacterial ribosomal protein bS18 family. In terms of assembly, part of the 30S ribosomal subunit. Forms a tight heterodimer with protein bS6.

In terms of biological role, binds as a heterodimer with protein bS6 to the central domain of the 16S rRNA, where it helps stabilize the platform of the 30S subunit. The protein is Small ribosomal subunit protein bS18 of Orientia tsutsugamushi (strain Ikeda) (Rickettsia tsutsugamushi).